The primary structure comprises 106 residues: Small ribosomal subunit protein uS10 (106 aa).

Belongs to the universal ribosomal protein uS10 family. As to quaternary structure, part of the 30S ribosomal subunit.

Functionally, involved in the binding of tRNA to the ribosomes. The polypeptide is Small ribosomal subunit protein uS10 (Prochlorococcus marinus (strain MIT 9515)).